Consider the following 742-residue polypeptide: 5-methyltetrahydropteroyltriglutamate--homocysteine methyltransferase (742 aa).

5-methyltetrahydropteroyltri-L-glutamate contacts are provided by residues 18–21 (REWK) and Lys112. Residues 420 to 422 (IGS) and Glu473 contribute to the L-homocysteine site. L-methionine-binding positions include 420 to 422 (IGS) and Glu473. 5-methyltetrahydropteroyltri-L-glutamate is bound at residue Trp550. Asp588 contacts L-homocysteine. Asp588 is an L-methionine binding site. Residue Glu594 participates in 5-methyltetrahydropteroyltri-L-glutamate binding. Zn(2+) is bound by residues His630, Cys632, and Glu654. His683 acts as the Proton donor in catalysis. Position 715 (Cys715) interacts with Zn(2+).

The protein belongs to the vitamin-B12 independent methionine synthase family. It depends on Zn(2+) as a cofactor.

The enzyme catalyses 5-methyltetrahydropteroyltri-L-glutamate + L-homocysteine = tetrahydropteroyltri-L-glutamate + L-methionine. Its pathway is amino-acid biosynthesis; L-methionine biosynthesis via de novo pathway; L-methionine from L-homocysteine (MetE route): step 1/1. Catalyzes the transfer of a methyl group from 5-methyltetrahydrofolate to homocysteine resulting in methionine formation. The protein is 5-methyltetrahydropteroyltriglutamate--homocysteine methyltransferase of Staphylococcus aureus (strain MRSA252).